The chain runs to 444 residues: Homogentisate 1,2-dioxygenase (444 aa).

H298 acts as the Proton acceptor in catalysis. Residues H341 and E347 each contribute to the Fe cation site. Homogentisate is bound by residues Y356 and H377. Residue H377 coordinates Fe cation.

The protein belongs to the homogentisate dioxygenase family. In terms of assembly, hexamer; dimer of trimers. Fe cation serves as cofactor.

The catalysed reaction is homogentisate + O2 = 4-maleylacetoacetate + H(+). The protein operates within amino-acid degradation; L-phenylalanine degradation; acetoacetate and fumarate from L-phenylalanine: step 4/6. In terms of biological role, involved in the catabolism of homogentisate (2,5-dihydroxyphenylacetate or 2,5-OH-PhAc), a central intermediate in the degradation of phenylalanine and tyrosine. Catalyzes the oxidative ring cleavage of the aromatic ring of homogentisate to yield maleylacetoacetate. This chain is Homogentisate 1,2-dioxygenase, found in Burkholderia orbicola (strain AU 1054).